The sequence spans 212 residues: External core antigen (212 aa).

The N-terminal stretch at 1-19 is a signal peptide; that stretch reads MQLFHLCLIISCSCPTVQA. Residues 25 to 27 are HBEAG; it reads GWL. Residues 179–212 are disordered; sequence RQRGRTIRRRTPSPRRRRSQSPRRRRSQSRESQC. Over residues 180–205 the composition is skewed to basic residues; it reads QRGRTIRRRTPSPRRRRSQSPRRRRS. A 1; half-length repeat occupies 184–190; the sequence is TIRRRTP. Residues 184–206 form a 3 X 8 AA repeats of S-P-R-R-R-R-S-Q region; it reads TIRRRTPSPRRRRSQSPRRRRSQ. Positions 184-212 are excised as a propeptide; it reads TIRRRTPSPRRRRSQSPRRRRSQSRESQC. A run of 2 repeats spans residues 191-198 and 199-206.

It belongs to the orthohepadnavirus precore antigen family. In terms of assembly, homodimerizes. In terms of processing, phosphorylated. Post-translationally, cleaved by host furin.

It localises to the secreted. It is found in the host nucleus. Its function is as follows. May regulate immune response to the intracellular capsid in acting as a T-cell tolerogen, by having an immunoregulatory effect which prevents destruction of infected cells by cytotoxic T-cells. This immune regulation may predispose to chronicity during perinatal infections and prevent severe liver injury during adult infections. This chain is External core antigen, found in Hepatitis B virus genotype D subtype ayw (isolate Australia/AustKW/1991) (HBV-D).